We begin with the raw amino-acid sequence, 215 residues long: MOB kinase activator-like 1A (215 aa).

The interval 1–29 (MSLFGLGSRNQKTFRPKKSAPTGSKGAQL) is disordered. Zn(2+) is bound by residues C80, C85, H162, and H167.

This sequence belongs to the MOB1/phocein family. In terms of tissue distribution, isoform 1 is constitutively expressed. Isoform 2 is specifically expressed in flowers bud during sporogenesis and gametogenesis.

It is found in the cytoplasm. The protein localises to the cytoskeleton. Its subcellular location is the phragmoplast. This Medicago sativa subsp. falcata (Sickle medic) protein is MOB kinase activator-like 1A.